The following is a 1050-amino-acid chain: Probable E3 ubiquitin-protein ligase HERC3 (1050 aa).

RCC1 repeat units lie at residues 1-51 (MLCW…FLLE), 52-101 (DGEV…ALSD), 102-154 (RGQL…ALAA), 156-207 (GQFF…ALSL), 208-259 (SGAV…VLTK), 261-311 (GGVF…AFVP), and 313-366 (SGLI…IVKQ). Positions 951–1050 (YKGDYSATHP…LDNYEGFSLA (100 aa)) constitute an HECT domain. The Glycyl thioester intermediate role is filled by C1018.

Ubiquitinated; which promotes degradation by the proteasome.

It localises to the cytoplasm. The protein resides in the cytoplasmic vesicle. It carries out the reaction S-ubiquitinyl-[E2 ubiquitin-conjugating enzyme]-L-cysteine + [acceptor protein]-L-lysine = [E2 ubiquitin-conjugating enzyme]-L-cysteine + N(6)-ubiquitinyl-[acceptor protein]-L-lysine.. It participates in protein modification; protein ubiquitination. In terms of biological role, E3 ubiquitin-protein ligase which accepts ubiquitin from an E2 ubiquitin-conjugating enzyme in the form of a thioester and then directly transfers the ubiquitin to targeted substrates. This Homo sapiens (Human) protein is Probable E3 ubiquitin-protein ligase HERC3 (HERC3).